The sequence spans 114 residues: Large ribosomal subunit protein uL22 (114 aa).

This sequence belongs to the universal ribosomal protein uL22 family. In terms of assembly, part of the 50S ribosomal subunit.

Its function is as follows. This protein binds specifically to 23S rRNA; its binding is stimulated by other ribosomal proteins, e.g. L4, L17, and L20. It is important during the early stages of 50S assembly. It makes multiple contacts with different domains of the 23S rRNA in the assembled 50S subunit and ribosome. In terms of biological role, the globular domain of the protein is located near the polypeptide exit tunnel on the outside of the subunit, while an extended beta-hairpin is found that lines the wall of the exit tunnel in the center of the 70S ribosome. In Streptococcus pneumoniae (strain Taiwan19F-14), this protein is Large ribosomal subunit protein uL22.